The chain runs to 150 residues: Large ribosomal subunit protein uL13 (150 aa).

The tract at residues 128–150 is disordered; sequence GSDHPHSAQEPKILSLNSESVTK.

Belongs to the universal ribosomal protein uL13 family. As to quaternary structure, part of the 50S ribosomal subunit.

This protein is one of the early assembly proteins of the 50S ribosomal subunit, although it is not seen to bind rRNA by itself. It is important during the early stages of 50S assembly. In Prochlorococcus marinus (strain NATL1A), this protein is Large ribosomal subunit protein uL13.